The following is a 43-amino-acid chain: U5-hexatoxin-Mr1a (43 aa).

4 disulfide bridges follow: Cys-1/Cys-16, Cys-8/Cys-21, Cys-15/Cys-36, and Cys-17/Cys-43.

The protein belongs to the neurotoxin 35 family. Post-translationally, contains 4 disulfide bonds. As to expression, expressed by the venom gland.

The protein resides in the secreted. In terms of biological role, this toxin blocks the neuromuscular transmission, and also acts on muscle. It exerts an effect of first exciting and then inhibiting the contraction of muscle. This toxin is active only against mammals. The protein is U5-hexatoxin-Mr1a of Macrothele raveni (Funnel-web spider).